We begin with the raw amino-acid sequence, 522 residues long: Gypsy retrotransposon integrase-like protein 1 (522 aa).

An Integrase catalytic domain is found at 135–292; it reads KVENPWSLVT…TPYFQMFSRN (158 aa). A Phosphoserine modification is found at serine 502.

The chain is Gypsy retrotransposon integrase-like protein 1 (GIN1) from Pongo abelii (Sumatran orangutan).